The following is a 337-amino-acid chain: Probable RuBisCO transcriptional regulator (337 aa).

Residues 6–63 (FTLDQLRILKAIAVEGSFKRAADSLYVSQPAVSLQVQNLERQLDVPLFDRGGRRAQLT) form the HTH lysR-type domain. The H-T-H motif DNA-binding region spans 23-42 (FKRAADSLYVSQPAVSLQVQ).

The protein belongs to the LysR transcriptional regulatory family.

In terms of biological role, trans-acting transcriptional regulator of RuBisCO genes (rbcL and rbcS) expression. The sequence is that of Probable RuBisCO transcriptional regulator (rbcR) from Trichormus variabilis (strain ATCC 29413 / PCC 7937) (Anabaena variabilis).